The following is a 263-amino-acid chain: Small ribosomal subunit protein eS4, Y isoform 1 (263 aa).

The 63-residue stretch at 42 to 104 (LPLIIFLRNR…TGEHFRLVYD (63 aa)) folds into the S4 RNA-binding domain.

It belongs to the eukaryotic ribosomal protein eS4 family.

This Macaca fuscata fuscata (Japanese macaque) protein is Small ribosomal subunit protein eS4, Y isoform 1 (RPS4Y1).